A 258-amino-acid chain; its full sequence is 5'-nucleotidase SurE (258 aa).

Positions 16, 17, 47, and 99 each coordinate a divalent metal cation.

It belongs to the SurE nucleotidase family. A divalent metal cation serves as cofactor.

Its subcellular location is the cytoplasm. It carries out the reaction a ribonucleoside 5'-phosphate + H2O = a ribonucleoside + phosphate. Nucleotidase that shows phosphatase activity on nucleoside 5'-monophosphates. In Coxiella burnetii (strain Dugway 5J108-111), this protein is 5'-nucleotidase SurE.